Here is an 89-residue protein sequence, read N- to C-terminus: Small ribosomal subunit protein bS16 (89 aa).

This sequence belongs to the bacterial ribosomal protein bS16 family.

This chain is Small ribosomal subunit protein bS16, found in Chloroflexus aggregans (strain MD-66 / DSM 9485).